Here is a 390-residue protein sequence, read N- to C-terminus: Chorismate synthase 2 (390 aa).

Positions 39 and 45 each coordinate NADP(+). FMN is bound by residues 132–134, 253–254, glycine 298, 313–317, and arginine 339; these read RSS, NA, and KPIPT.

This sequence belongs to the chorismate synthase family. Homotetramer. It depends on FMNH2 as a cofactor.

The catalysed reaction is 5-O-(1-carboxyvinyl)-3-phosphoshikimate = chorismate + phosphate. The protein operates within metabolic intermediate biosynthesis; chorismate biosynthesis; chorismate from D-erythrose 4-phosphate and phosphoenolpyruvate: step 7/7. Catalyzes the anti-1,4-elimination of the C-3 phosphate and the C-6 proR hydrogen from 5-enolpyruvylshikimate-3-phosphate (EPSP) to yield chorismate, which is the branch point compound that serves as the starting substrate for the three terminal pathways of aromatic amino acid biosynthesis. This reaction introduces a second double bond into the aromatic ring system. The protein is Chorismate synthase 2 of Bacillus cereus (strain ZK / E33L).